We begin with the raw amino-acid sequence, 194 residues long: Outer-membrane lipoprotein LolB (194 aa).

The first 18 residues, 1 to 18, serve as a signal peptide directing secretion; sequence MTLLLRLFTLGCLLLLAG. Cysteine 19 is lipidated: N-palmitoyl cysteine. Cysteine 19 is lipidated: S-diacylglycerol cysteine.

This sequence belongs to the LolB family. As to quaternary structure, monomer.

Its subcellular location is the cell outer membrane. Plays a critical role in the incorporation of lipoproteins in the outer membrane after they are released by the LolA protein. The polypeptide is Outer-membrane lipoprotein LolB (Aeromonas hydrophila subsp. hydrophila (strain ATCC 7966 / DSM 30187 / BCRC 13018 / CCUG 14551 / JCM 1027 / KCTC 2358 / NCIMB 9240 / NCTC 8049)).